A 130-amino-acid chain; its full sequence is Small ribosomal subunit protein uS11 (130 aa).

This sequence belongs to the universal ribosomal protein uS11 family. In terms of assembly, part of the 30S ribosomal subunit. Interacts with proteins S7 and S18. Binds to IF-3.

In terms of biological role, located on the platform of the 30S subunit, it bridges several disparate RNA helices of the 16S rRNA. Forms part of the Shine-Dalgarno cleft in the 70S ribosome. In Prochlorococcus marinus (strain MIT 9301), this protein is Small ribosomal subunit protein uS11.